The primary structure comprises 485 residues: Glutamyl-tRNA(Gln) amidotransferase subunit A (485 aa).

Catalysis depends on charge relay system residues lysine 78 and serine 153. The active-site Acyl-ester intermediate is serine 177.

The protein belongs to the amidase family. GatA subfamily. As to quaternary structure, heterotrimer of A, B and C subunits.

It carries out the reaction L-glutamyl-tRNA(Gln) + L-glutamine + ATP + H2O = L-glutaminyl-tRNA(Gln) + L-glutamate + ADP + phosphate + H(+). In terms of biological role, allows the formation of correctly charged Gln-tRNA(Gln) through the transamidation of misacylated Glu-tRNA(Gln) in organisms which lack glutaminyl-tRNA synthetase. The reaction takes place in the presence of glutamine and ATP through an activated gamma-phospho-Glu-tRNA(Gln). The polypeptide is Glutamyl-tRNA(Gln) amidotransferase subunit A (Bacillus anthracis (strain A0248)).